The sequence spans 224 residues: Glutathione S-transferase Mu 5 (224 aa).

The 88-residue stretch at Lys-4–Gly-91 folds into the GST N-terminal domain. Phosphoserine is present on Ser-5. Residues Tyr-10 to Trp-11, Trp-49 to Lys-53, Asn-62 to Leu-63, and Gln-75 to Ser-76 contribute to the glutathione site. Residues Thr-93–Ile-211 form the GST C-terminal domain. Position 119 (Tyr-119) interacts with substrate.

It belongs to the GST superfamily. Mu family. As to quaternary structure, homodimer. Interacts with PFKM isoform 2 and isoform 3 (via N-terminal testis-specific region).

The protein localises to the cytoplasm. The catalysed reaction is RX + glutathione = an S-substituted glutathione + a halide anion + H(+). In terms of biological role, conjugation of reduced glutathione to a wide number of exogenous and endogenous hydrophobic electrophiles. This is Glutathione S-transferase Mu 5 (Gstm5) from Mus musculus (Mouse).